The chain runs to 116 residues: Large ribosomal subunit protein bL17 (116 aa).

The protein belongs to the bacterial ribosomal protein bL17 family. As to quaternary structure, part of the 50S ribosomal subunit. Contacts protein L32.

The protein is Large ribosomal subunit protein bL17 of Prochlorococcus marinus subsp. pastoris (strain CCMP1986 / NIES-2087 / MED4).